The sequence spans 547 residues: Phosphoethanolamine transferase EptA (547 aa).

The Cytoplasmic segment spans residues 1–9 (MLKRLLKRP). The chain crosses the membrane as a helical span at residues 10-30 (SLNLLAWLLLAAFYISICLNI). The Periplasmic portion of the chain corresponds to 31–47 (AFFKQVLQALPLDSLHN). Residues 48–68 (VLVFLSMPVVAFSVINIVLTL) traverse the membrane as a helical segment. Residues 69–79 (SSFLWLNRPLA) lie on the Cytoplasmic side of the membrane. The helical transmembrane segment at 80–100 (CLFILVGAAAQYFIMTYGIVI) threads the bilayer. The Periplasmic portion of the chain corresponds to 101-123 (DRSMIANIIDTTPAESYALMTPQ). The chain crosses the membrane as a helical span at residues 124–144 (MLLTLGFSGVLAALIACWIKI). Residues 145–154 (KPATSRLRSV) are Cytoplasmic-facing. Residues 155–175 (LFRGANILVSVLLILLVAALF) form a helical membrane-spanning segment. At 176–547 (YKDYASLFRN…ILQTCRRVSE (372 aa)) the chain is on the periplasmic side.

The protein belongs to the phosphoethanolamine transferase family. EptA subfamily. In terms of assembly, has been isolated as a 91 kDa complex containing ZipA-EptA and an unidentified 24 kDa protein.

The protein resides in the cell inner membrane. Its function is as follows. Catalyzes the addition of a phosphoethanolamine moiety to the lipid A. The phosphoethanolamine modification is required for resistance to polymyxin. The chain is Phosphoethanolamine transferase EptA (eptA) from Escherichia coli (strain K12).